The following is a 428-amino-acid chain: Serine--tRNA ligase (428 aa).

235 to 237 is an L-serine binding site; it reads TAE. Position 266 to 268 (266 to 268) interacts with ATP; it reads RSE. L-serine is bound at residue E289. 353-356 is a binding site for ATP; that stretch reads EISS. S389 contacts L-serine.

This sequence belongs to the class-II aminoacyl-tRNA synthetase family. Type-1 seryl-tRNA synthetase subfamily. In terms of assembly, homodimer. The tRNA molecule binds across the dimer.

Its subcellular location is the cytoplasm. The catalysed reaction is tRNA(Ser) + L-serine + ATP = L-seryl-tRNA(Ser) + AMP + diphosphate + H(+). It carries out the reaction tRNA(Sec) + L-serine + ATP = L-seryl-tRNA(Sec) + AMP + diphosphate + H(+). Its pathway is aminoacyl-tRNA biosynthesis; selenocysteinyl-tRNA(Sec) biosynthesis; L-seryl-tRNA(Sec) from L-serine and tRNA(Sec): step 1/1. Functionally, catalyzes the attachment of serine to tRNA(Ser). Is also able to aminoacylate tRNA(Sec) with serine, to form the misacylated tRNA L-seryl-tRNA(Sec), which will be further converted into selenocysteinyl-tRNA(Sec). This chain is Serine--tRNA ligase, found in Shewanella woodyi (strain ATCC 51908 / MS32).